The chain runs to 139 residues: Cystatin-1 (139 aa).

The N-terminal stretch at 1-22 (MHSRLPVPASLCLLLLLPSVLP) is a signal peptide. One can recognise a Cystatin domain in the interval 27–127 (GGLSPRDVTD…CHFEVWSRPW (101 aa)). A Secondary area of contact motif is present at residues 71–75 (QVVSG). Cystine bridges form between cysteine 89–cysteine 105 and cysteine 118–cysteine 138.

This sequence belongs to the cystatin family. Expressed by the venom gland.

The protein resides in the secreted. Inhibits various C1 cysteine proteases including cathepsin L, papain and cathepsin B. This protein has no toxic activity and its function in the venom is unknown. It may play a role as housekeeping or regulatory protein. The protein is Cystatin-1 of Crotalus adamanteus (Eastern diamondback rattlesnake).